The chain runs to 156 residues: Sensor histidine kinase component HK2 (156 aa).

Topologically, residues 1–42 are extracellular; the sequence is MALVLAAAGAVTVVQFRDAAHEADPDGALRGLTDDITADLVR. The chain crosses the membrane as a helical span at residues 43–63; the sequence is ELVTILPIVLVIAAVAAYLLS. Positions 64 to 120 constitute an HAMP domain; that stretch reads RAALRPVDRIRAAAQTLTTTPHPDTDAPLPVPPTDDEIAWLATTLNTMLTRLQRALA. Residues 64–156 are Cytoplasmic-facing; the sequence is RAALRPVDRI…RCAGPDPPTS (93 aa). Positions 128 to 156 constitute a Histidine kinase; first part domain; it reads DASHELRTPLALLTTELELRCAGPDPPTS. A Phosphohistidine; by autocatalysis modification is found at His-131.

As to quaternary structure, homodimer. Each monomer interacts with HK1 and the receiver domain of TcrA. Phosphorylated by HK1.

It is found in the cell membrane. It carries out the reaction ATP + protein L-histidine = ADP + protein N-phospho-L-histidine.. Its function is as follows. Member of the three-protein two-component system HK1/HK2/TcrA. HK2 transfers its phosphoryl group to TcrA. The chain is Sensor histidine kinase component HK2 from Mycobacterium tuberculosis (strain ATCC 25618 / H37Rv).